The sequence spans 655 residues: Serine/threonine-protein kinase SKM1 (655 aa).

Residues Gly-3 to Pro-118 enclose the PH domain. The CRIB domain maps to Val-123 to Gly-136. Basic and acidic residues-rich tracts occupy residues Glu-265 to Thr-276 and Lys-318 to His-327. The interval Glu-265–His-327 is disordered. The Protein kinase domain maps to Phe-360–Leu-639. Residues Ala-366–Val-374 and Lys-406 contribute to the ATP site. Catalysis depends on Asp-507, which acts as the Proton acceptor.

This sequence belongs to the protein kinase superfamily. STE Ser/Thr protein kinase family. STE20 subfamily.

It catalyses the reaction L-seryl-[protein] + ATP = O-phospho-L-seryl-[protein] + ADP + H(+). The catalysed reaction is L-threonyl-[protein] + ATP = O-phospho-L-threonyl-[protein] + ADP + H(+). In terms of biological role, may be involved in cellular signaling or cytoskeletal functions. May play a role in morphogenetic control. The polypeptide is Serine/threonine-protein kinase SKM1 (SKM1) (Saccharomyces cerevisiae (strain ATCC 204508 / S288c) (Baker's yeast)).